Consider the following 249-residue polypeptide: Homeobox protein TGIF2LX (249 aa).

Disordered stretches follow at residues M1–G62 and D126–V192. Over residues A9 to P27 the composition is skewed to basic and acidic residues. A compositionally biased stretch (polar residues) spans A28–D46. Positions E55–D118 form a DNA-binding region, homeobox; TALE-type. Residues D159 to G172 show a composition bias toward polar residues.

Belongs to the TALE/TGIF homeobox family.

Its subcellular location is the nucleus. Its function is as follows. May have a transcription role in testis. The sequence is that of Homeobox protein TGIF2LX (TGIF2LX) from Macaca fascicularis (Crab-eating macaque).